The primary structure comprises 151 residues: UPF0208 membrane protein CKO_00500 (151 aa).

The next 2 helical transmembrane spans lie at 46-65 (YAIR…QIAL) and 69-91 (LGPA…WWLG).

The protein belongs to the UPF0208 family.

The protein localises to the cell inner membrane. The sequence is that of UPF0208 membrane protein CKO_00500 from Citrobacter koseri (strain ATCC BAA-895 / CDC 4225-83 / SGSC4696).